A 648-amino-acid chain; its full sequence is Acetyl-coenzyme A synthetase (648 aa).

Residues 191 to 194 (RGGR), Thr310, and Asn334 each bind CoA. Residues 386-388 (GEP), 410-415 (DTWWQT), Asp499, and Arg514 contribute to the ATP site. Ser522 contacts CoA. ATP is bound at residue Arg525. Mg(2+)-binding residues include Val536, His538, and Ile541. Residue Arg583 participates in CoA binding. Position 608 is an N6-acetyllysine (Lys608).

It belongs to the ATP-dependent AMP-binding enzyme family. The cofactor is Mg(2+). In terms of processing, acetylated. Deacetylation by the SIR2-homolog deacetylase activates the enzyme.

It catalyses the reaction acetate + ATP + CoA = acetyl-CoA + AMP + diphosphate. In terms of biological role, catalyzes the conversion of acetate into acetyl-CoA (AcCoA), an essential intermediate at the junction of anabolic and catabolic pathways. AcsA undergoes a two-step reaction. In the first half reaction, AcsA combines acetate with ATP to form acetyl-adenylate (AcAMP) intermediate. In the second half reaction, it can then transfer the acetyl group from AcAMP to the sulfhydryl group of CoA, forming the product AcCoA. The polypeptide is Acetyl-coenzyme A synthetase (Aeromonas salmonicida (strain A449)).